The chain runs to 224 residues: Transcriptional regulatory protein CiaR (224 aa).

A Response regulatory domain is found at 3 to 116 (KILLVEDDLG…ELKMRIQALL (114 aa)). Aspartate 51 carries the 4-aspartylphosphate modification. Positions 124–222 (ENTLTYGNIV…LRSVGYLLKD (99 aa)) form a DNA-binding region, ompR/PhoB-type.

In terms of processing, phosphorylated by CiaH.

Its subcellular location is the cytoplasm. Member of the two-component regulatory system CiaH/CiaR. Involved in early steps of competence regulation and in penicillin susceptibility. The chain is Transcriptional regulatory protein CiaR (ciaR) from Streptococcus pneumoniae (strain ATCC BAA-255 / R6).